The chain runs to 302 residues: Acetaldehyde dehydrogenase 2 (302 aa).

Cysteine 130 functions as the Acyl-thioester intermediate in the catalytic mechanism. Residues 161–169 (SVGPGTRRN) and asparagine 272 contribute to the NAD(+) site.

Belongs to the acetaldehyde dehydrogenase family.

It catalyses the reaction acetaldehyde + NAD(+) + CoA = acetyl-CoA + NADH + H(+). The protein is Acetaldehyde dehydrogenase 2 of Cupriavidus necator (strain ATCC 17699 / DSM 428 / KCTC 22496 / NCIMB 10442 / H16 / Stanier 337) (Ralstonia eutropha).